Here is a 196-residue protein sequence, read N- to C-terminus: MDDTLFQLKFTAKQLEKLAKKAEKDSKAEQAKVKKALLQKNVECARVYAENAIRKKNEGVNWLRMASRVDAVASKVQTAVTMKGVTKNMAQVTKALDKALSTMDLQKVSSVMDRFEQQVQNLDVHTSVMEDSMSSATTLTTPQEQVDSLIMQIAEENGLEVLDQLSQLPEGASAVGESSVRSQEDQLSRRLAALRN.

Residue Met1 is modified to N-acetylmethionine. Positions 5–47 (LFQLKFTAKQLEKLAKKAEKDSKAEQAKVKKALLQKNVECARV) form a coiled coil. Phosphoserine is present on Ser101. Residues 102–124 (TMDLQKVSSVMDRFEQQVQNLDV) are a coiled coil. Position 173 is a phosphoserine (Ser173). The segment at 173–196 (SAVGESSVRSQEDQLSRRLAALRN) is disordered. Residues 185–195 (DQLSRRLAALR) carry the MIT-interacting motif motif.

This sequence belongs to the SNF7 family. As to quaternary structure, probable peripherally associated component of the endosomal sorting required for transport complex III (ESCRT-III). ESCRT-III components are thought to multimerize to form a flat lattice on the perimeter membrane of the endosome. Several assembly forms of ESCRT-III may exist that interact and act sequentially. Self-associates. Interacts with CHMP1B. Interacts with VPS4A. Interacts with VPS4B. Interacts with PHF1. Interacts with IST1. Interacts with MITD1. In terms of tissue distribution, expressed in placenta, cultured skin fibroblasts and in osteoblast cell line MG-63.

It is found in the cytoplasm. It localises to the endosome membrane. The protein resides in the nucleus matrix. Its function is as follows. Probable peripherally associated component of the endosomal sorting required for transport complex III (ESCRT-III) which is involved in multivesicular bodies (MVBs) formation and sorting of endosomal cargo proteins into MVBs. MVBs contain intraluminal vesicles (ILVs) that are generated by invagination and scission from the limiting membrane of the endosome and mostly are delivered to lysosomes enabling degradation of membrane proteins, such as stimulated growth factor receptors, lysosomal enzymes and lipids. The MVB pathway appears to require the sequential function of ESCRT-O, -I,-II and -III complexes. ESCRT-III proteins mostly dissociate from the invaginating membrane before the ILV is released. The ESCRT machinery also functions in topologically equivalent membrane fission events, such as the terminal stages of cytokinesis and the budding of enveloped viruses (HIV-1 and other lentiviruses). ESCRT-III proteins are believed to mediate the necessary vesicle extrusion and/or membrane fission activities, possibly in conjunction with the AAA ATPase VPS4. Involved in cytokinesis. Involved in recruiting VPS4A and/or VPS4B to the midbody of dividing cells. May also be involved in chromosome condensation. Targets the Polycomb group (PcG) protein BMI1/PCGF4 to regions of condensed chromatin. May play a role in stable cell cycle progression and in PcG gene silencing. The protein is Charged multivesicular body protein 1a (CHMP1A) of Homo sapiens (Human).